Consider the following 574-residue polypeptide: Amino-acid acetyltransferase, mitochondrial (574 aa).

The N-terminal 13 residues, 1–13 (MWRRIFAHELKYD), are a transit peptide targeting the mitochondrion. The N-acetyltransferase domain occupies 392–560 (KGAKPSSNSP…KRLREFMRSV (169 aa)).

The protein belongs to the acetyltransferase family. Interacts with the acetylglutamate kinase chain of AGR5,6.

Its subcellular location is the mitochondrion. It catalyses the reaction L-glutamate + acetyl-CoA = N-acetyl-L-glutamate + CoA + H(+). The protein operates within amino-acid biosynthesis; L-arginine biosynthesis; N(2)-acetyl-L-ornithine from L-glutamate: step 1/4. Feedback inhibition by L-arginine. In terms of biological role, N-acetylglutamate synthase involved in arginine biosynthesis. This chain is Amino-acid acetyltransferase, mitochondrial (ARG2), found in Saccharomyces cerevisiae (strain RM11-1a) (Baker's yeast).